The primary structure comprises 470 residues: MHFSIPETESRSGDSGGSAYVAYNIHVNGVLHCRVRYSQLLGLHEQLRKEYGANVLPAFPPKKLFSLTPAEVEQRREQLEKYMQAVRQDPLLGSSETFNSFLRRAQQETQQVPTEEVSLEVLLSNGQKVLVNVLTSDQTEDVLEAVAAKLDLPDDLIGYFSLFLVREKEDGAFSFVRKLQEFELPYVSVTSLRSQEYKIVLRKSYWDSAYDDDVMENRVGLNLLYAQTVADIERGWILVTKEQHRQLKSLQEKVSKKEFLRLAQTLRHYGYLRFDACVADFPEKDCPVVVSAGNSELSLQLRLPGQQLREGSFRVTRMRCWRVTSSVPLPSGGTSSPGRGRGEVRLELAFEYLMSKDRLQWVTITSPQAIMMSICLQSMVDELMVKKSGGSIRKMLRRRVGGTLRRSDSQQAVKSPPLLESPDASRESMVKLSSKLSAVSLRGIGTPGTDASASDVHGNFAFEGIGDEDL.

A PX domain is found at 1-109 (MHFSIPETES…SFLRRAQQET (109 aa)). A 1,2-diacyl-sn-glycero-3-phospho-(1D-myo-inositol-3-phosphate) is bound by residues Arg36, Ser38, Lys62, and Arg75. A Ras-associating domain is found at 115-206 (EEVSLEVLLS…YKIVLRKSYW (92 aa)). The tract at residues 115–432 (EEVSLEVLLS…DASRESMVKL (318 aa)) is FERM-like. The segment at 270-432 (GYLRFDACVA…DASRESMVKL (163 aa)) is PTB-like F3 module. 7 positions are modified to phosphoserine: Ser336, Ser407, Ser409, Ser415, Ser421, Ser437, and Ser440. The segment at 400 to 426 (VGGTLRRSDSQQAVKSPPLLESPDASR) is disordered.

Belongs to the sorting nexin family. As to quaternary structure, monomer. Interacts with APP (via cytoplasmic YXNPXY motif). Interacts with KIF1B. Interacts with the C-termini of P-selectin, PTC, LDLR, VLDLR, LRP1 and LRP8. Interacts with KRIT1 (via N-terminus). Interacts with HRAS. Interacts with ITGB1 and ITGB5 (via NPxY motif). Interacts with CCDC22 and CCDC93; the interaction associates SNX17 with the CCC complex. Interacts (via C-terminus) with VPS26C and VPS35L; the interactions are direct and associate SNX17 with the retriever complex.

The protein resides in the cytoplasm. The protein localises to the early endosome. Its subcellular location is the cytoplasmic vesicle membrane. Critical regulator of endosomal recycling of numerous surface proteins, including integrins, signaling receptor and channels. Binds to NPxY sequences in the cytoplasmic tails of target cargos. Associates with retriever and CCC complexes to prevent lysosomal degradation and promote cell surface recycling of numerous cargos such as integrins ITGB1, ITGB5 and their associated alpha subunits. Also required for maintenance of normal cell surface levels of APP and LRP1. Interacts with membranes containing phosphatidylinositol 3-phosphate (PtdIns(3P)). This Bos taurus (Bovine) protein is Sorting nexin-17 (SNX17).